Reading from the N-terminus, the 202-residue chain is Recoverin (202 aa).

Residue glycine 2 is the site of N-myristoyl glycine attachment. Cysteine 39 carries the post-translational modification Cysteine sulfenic acid (-SOH). 4 EF-hand domains span residues 41-59 (SGRI…FFPE), 61-96 (DPKA…TSAG), 97-132 (KTNQ…IFKM), and 147-182 (TPEK…NKEI). The Ca(2+) site is built by aspartate 74, asparagine 76, aspartate 78, threonine 80, glutamate 85, aspartate 110, aspartate 112, asparagine 114, and glutamate 121. Residues 189-192 (EPRK) form an interaction with GRK1 region.

Belongs to the recoverin family. In terms of assembly, homodimer; disulfide-linked. Homodimerization is caused by prolonged intense illumination. May form a complex composed of RHO, GRK1 and RCVRN in a Ca(2+)-dependent manner; RCVRN prevents the interaction between GRK1 and RHO. Interacts (via C-terminus) with GRK1 (via N-terminus); the interaction is Ca(2+)-dependent. In terms of processing, the N-terminal glycine is linked to one of four different types of acyl groups. The most abundant is myristoleate (14:1), but 14:0, 14:2, and 12:0 acyl residues are also present. The Ca(2+) induced exposure of the myristoyl group, known as the calcium-myristoyl switch, promotes RCVRN binding to the photoreceptor cell membranes only when intracellular Ca(2+) concentration is high. Oxidation on Cys-39 occurs in response to prolonged intense illumination and results in the formation of disulfide homodimers, and to a lesser extent disulfide-linked heterodimers.

The protein localises to the photoreceptor inner segment. It is found in the cell projection. It localises to the cilium. The protein resides in the photoreceptor outer segment. Its subcellular location is the photoreceptor outer segment membrane. The protein localises to the perikaryon. Acts as a calcium sensor and regulates phototransduction of cone and rod photoreceptor cells. Modulates light sensitivity of cone photoreceptor in dark and dim conditions. In response to high Ca(2+) levels induced by low light levels, prolongs RHO/rhodopsin activation in rod photoreceptor cells by binding to and inhibiting GRK1-mediated phosphorylation of RHO/rhodopsin. Plays a role in scotopic vision/enhances vision in dim light by enhancing signal transfer between rod photoreceptors and rod bipolar cells. Improves rod photoreceptor sensitivity in dim light and mediates response of rod photoreceptors to facilitate detection of change and motion in bright light. The chain is Recoverin (RCVRN) from Canis lupus familiaris (Dog).